Consider the following 485-residue polypeptide: MSLFDHSVSELHKKLNNKEISVTDLVEESYKRIADVEDNVKAFLTLDEENARAKAKELDAKIGAEDNGLLFGMPIGVKDNIVTNGLRTTCASKILANFDPIYDATVVQKLKAADTITIGKLNMDEFAMGSSNENSGFYATKNPWNLDYVPGGSSGGSAAAVAAGEVLFSLGSDTGGSIRQPAAYCGVVGLKPTYGRVSRYGLVAFASSLDQIGPITRTVEDNAYLLQAISGLDRMDATSANVEVGNYLAGLTGDVKGLRIAVPKEYLGEGVGEEARESVLAALKVLEGMGATWEEVSLPHSKYALATYYLLSSSEASANLSRFDGVRYGVRSDNVNNLMDLYKNTRSEGFGDEVKRRIMLGTFALSSGYYDAYYKKAQQVRTLIKNDFENVFANYDVIIGPTTPTPAFKVGEKVDDPMTMYANDILTIPVNLAGVPAISVPCGFGANNMPLGLQIIGKHFDEATIYRVAHAFEQATDHHTKKASL.

Active-site charge relay system residues include Lys-78 and Ser-153. The Acyl-ester intermediate role is filled by Ser-177.

This sequence belongs to the amidase family. GatA subfamily. Heterotrimer of A, B and C subunits.

It catalyses the reaction L-glutamyl-tRNA(Gln) + L-glutamine + ATP + H2O = L-glutaminyl-tRNA(Gln) + L-glutamate + ADP + phosphate + H(+). In terms of biological role, allows the formation of correctly charged Gln-tRNA(Gln) through the transamidation of misacylated Glu-tRNA(Gln) in organisms which lack glutaminyl-tRNA synthetase. The reaction takes place in the presence of glutamine and ATP through an activated gamma-phospho-Glu-tRNA(Gln). The sequence is that of Glutamyl-tRNA(Gln) amidotransferase subunit A from Bacillus anthracis (strain A0248).